Consider the following 274-residue polypeptide: Lipoprotein E (274 aa).

Positions 1–20 (MKTTLKMTALAALSAFVLAG) are cleaved as a signal peptide. Cys21 is lipidated: N-palmitoyl cysteine. Cys21 is lipidated: S-diacylglycerol cysteine.

Its subcellular location is the cell outer membrane. The sequence is that of Lipoprotein E (hel) from Haemophilus influenzae (strain ATCC 51907 / DSM 11121 / KW20 / Rd).